Reading from the N-terminus, the 655-residue chain is DNA mismatch repair protein MutL (655 aa).

Disordered regions lie at residues 357 to 416 (EKKQ…DDYT) and 439 to 460 (DFDS…SKDP). Over residues 371-383 (SHEEDEKNDDKAY) the composition is skewed to basic and acidic residues. The segment covering 402–416 (NTSVSTSPNSDDDYT) has biased composition (polar residues).

Belongs to the DNA mismatch repair MutL/HexB family.

This protein is involved in the repair of mismatches in DNA. It is required for dam-dependent methyl-directed DNA mismatch repair. May act as a 'molecular matchmaker', a protein that promotes the formation of a stable complex between two or more DNA-binding proteins in an ATP-dependent manner without itself being part of a final effector complex. The chain is DNA mismatch repair protein MutL from Staphylococcus saprophyticus subsp. saprophyticus (strain ATCC 15305 / DSM 20229 / NCIMB 8711 / NCTC 7292 / S-41).